Consider the following 246-residue polypeptide: tRNA (guanine-N(1)-)-methyltransferase (246 aa).

S-adenosyl-L-methionine-binding positions include Gly-113 and 133-138 (IGDYVL).

It belongs to the RNA methyltransferase TrmD family. In terms of assembly, homodimer.

The protein localises to the cytoplasm. The catalysed reaction is guanosine(37) in tRNA + S-adenosyl-L-methionine = N(1)-methylguanosine(37) in tRNA + S-adenosyl-L-homocysteine + H(+). In terms of biological role, specifically methylates guanosine-37 in various tRNAs. The polypeptide is tRNA (guanine-N(1)-)-methyltransferase (Haemophilus influenzae (strain PittEE)).